A 953-amino-acid polypeptide reads, in one-letter code: Mannosylglycoprotein endo-beta-mannosidase (953 aa).

The active-site Proton donor is glutamate 461. Glutamate 553 (nucleophile) is an active-site residue.

This sequence belongs to the glycosyl hydrolase 2 family. As to quaternary structure, heterotrimer of 31 kDa, 28 kDa and 42 kDa subunits. In terms of processing, the mature enzyme is proteotically cleaved into 3 subunits of 31 kDa, 28 kDa and 42 kDa. In terms of tissue distribution, ubiquitously expressed.

The catalysed reaction is Hydrolysis of the alpha-D-mannosyl-(1-&gt;6)-beta-D-mannosyl-(1-&gt;4)-N-acetyl-beta-D-glucosaminyl-(1-&gt;4)-N-acetyl-beta-D-glucosaminyl sequence of glycoprotein to alpha-D-mannosyl-(1-&gt;6)-D-mannose and N-acetyl-beta-D-glucosaminyl-(1-&gt;4)-N-acetyl-beta-D-glucosaminyl sequences.. Its function is as follows. Glycosidase that specifically hydrolyzes the Man-beta-1,4-GlcNAc linkage in the trimannosyl core structure of N-glycans. Does not hydrolyzes pyridylamino derivatives sugar chains containing Man-alpha-1,3-Man-beta or Xylose-beta-1,2-Man-beta. The polypeptide is Mannosylglycoprotein endo-beta-mannosidase (EBM) (Lilium longiflorum (Trumpet lily)).